The primary structure comprises 292 residues: Short chain dehydrogenases/reductase notP' (292 aa).

The segment at Met-1–Ser-25 is disordered. NADP(+) is bound by residues Leu-48, Asp-97, Lys-158, Tyr-193, Lys-197, Ile-230, and Thr-232. Catalysis depends on Tyr-193, which acts as the Proton donor. Residue Lys-197 is the Lowers pKa of active site Tyr of the active site.

This sequence belongs to the short-chain dehydrogenases/reductases (SDR) family.

Its function is as follows. Short chain dehydrogenases/reductase; part of the gene cluster that mediates the biosynthesis of notoamide, a fungal indole alkaloid that belongs to a family of natural products containing a characteristic bicyclo[2.2.2]diazaoctane core. The first step of notoamide biosynthesis involves coupling of L-proline and L-tryptophan by the bimodular NRPS notE', to produce cyclo-L-tryptophan-L-proline called brevianamide F. The reverse prenyltransferase notF' then acts as a deoxybrevianamide E synthase and converts brevianamide F to deoxybrevianamide E via reverse prenylation at C-2 of the indole ring leading to the bicyclo[2.2.2]diazaoctane core. Deoxybrevianamide E is further hydroxylated at C-6 of the indole ring, likely catalyzed by the cytochrome P450 monooxygenase notG', to yield 6-hydroxy-deoxybrevianamide E. 6-hydroxy-deoxybrevianamide E is a specific substrate of the prenyltransferase notC' for normal prenylation at C-7 to produce 6-hydroxy-7-prenyl-deoxybrevianamide, also called notoamide S. As the proposed pivotal branching point in notoamide biosynthesis, notoamide S can be diverted to notoamide E through an oxidative pyran ring closure putatively catalyzed by either notH' cytochrome P450 monooxygenase or the notD' FAD-linked oxidoreductase. This step would be followed by an indole 2,3-epoxidation-initiated pinacol-like rearrangement catalyzed by the notB' FAD-dependent monooxygenase leading to the formation of notoamide C and notoamide D. On the other hand notoamide S is converted to notoamide T by notH' (or notD'), a bifunctional oxidase that also functions as the intramolecular Diels-Alderase responsible for generation of (-)-notoamide T. To generate antipodal (+)-notoaminide T, notH (or notD) in Aspergillus strain MF297-2 is expected to catalyze a Diels-Alder reaction leading to the opposite stereochemistry. The remaining oxidoreductase notD' (or notH') likely catalyzes the oxidative pyran ring formation to yield (-)-stephacidin A. The FAD-dependent monooxygenase notI' is highly similar to notB' and is predicted to catalyze a similar conversion from (-)-stephacidin A to (+)-notoamide B via the 2,3-epoxidation of (-)-stephacidin A followed by a pinacol-type rearrangement. Finally, it remains unclear which enzyme could be responsible for the final hydroxylation steps leading to notoamide A and sclerotiamide. The function of notP' in the notoamide biosynthesis has not been determined yet. The polypeptide is Short chain dehydrogenases/reductase notP' (Aspergillus versicolor).